The following is a 493-amino-acid chain: Mitochondrial distribution and morphology protein 10 (493 aa).

Belongs to the MDM10 family. In terms of assembly, component of the ER-mitochondria encounter structure (ERMES) or MDM complex, composed of MMM1, MDM10, MDM12 and MDM34. Associates with the mitochondrial outer membrane sorting assembly machinery SAM(core) complex, which consists of SAM35, SAM37 and SAM50, to form a SAM(holo) complex.

It is found in the mitochondrion outer membrane. In terms of biological role, component of the ERMES/MDM complex, which serves as a molecular tether to connect the endoplasmic reticulum and mitochondria. Components of this complex are involved in the control of mitochondrial shape and protein biogenesis and may function in phospholipid exchange. MDM10 is involved in the late assembly steps of the general translocase of the mitochondrial outer membrane (TOM complex). Functions in the TOM40-specific route of the assembly of outer membrane beta-barrel proteins, including the association of TOM40 with the receptor TOM22 and small TOM proteins. Can associate with the SAM(core) complex as well as the MDM12-MMM1 complex, both involved in late steps of the major beta-barrel assembly pathway, that is responsible for biogenesis of all outer membrane beta-barrel proteins. May act as a switch that shuttles between both complexes and channels precursor proteins into the TOM40-specific pathway. Plays a role in mitochondrial morphology and in the inheritance of mitochondria. The protein is Mitochondrial distribution and morphology protein 10 of Saccharomyces cerevisiae (strain YJM789) (Baker's yeast).